The primary structure comprises 72 residues: DNA-directed RNA polymerase subunit omega (72 aa).

The protein belongs to the RNA polymerase subunit omega family. In terms of assembly, the RNAP catalytic core consists of 2 alpha, 1 beta, 1 beta' and 1 omega subunit. When a sigma factor is associated with the core the holoenzyme is formed, which can initiate transcription.

The enzyme catalyses RNA(n) + a ribonucleoside 5'-triphosphate = RNA(n+1) + diphosphate. In terms of biological role, promotes RNA polymerase assembly. Latches the N- and C-terminal regions of the beta' subunit thereby facilitating its interaction with the beta and alpha subunits. This chain is DNA-directed RNA polymerase subunit omega, found in Petrotoga mobilis (strain DSM 10674 / SJ95).